Here is a 646-residue protein sequence, read N- to C-terminus: Alkyl/aryl-sulfatase BDS1 (646 aa).

Met-1 is subject to N-acetylmethionine. 7 residues coordinate Zn(2+): His-162, His-164, Asp-166, His-167, Glu-273, Glu-292, and His-337.

This sequence belongs to the metallo-beta-lactamase superfamily. Type III sulfatase family. The cofactor is Zn(2+).

Functionally, alkyl/aryl-sulfatase. Enables the use of SDS and 4-nitrocatechol as sulfur source. This is Alkyl/aryl-sulfatase BDS1 (BDS1) from Saccharomyces cerevisiae (strain ATCC 204508 / S288c) (Baker's yeast).